The chain runs to 655 residues: RNA-binding protein EWS (655 aa).

An EAD (Gln/Pro/Thr-rich) region spans residues 1–285 (MASTDYSTYS…GVYGQESGGF (285 aa)). A run of 31 repeats spans residues 8 to 16 (TYSQAAAQQ), 17 to 27 (GYSAYTAQPTQ), 28 to 34 (GYAQTTQ), 35 to 42 (AYGQQSYG), 43 to 50 (TYGQPTDV), 51 to 59 (SYTQAQTTA), 60 to 68 (TYGQTAYAT), 69 to 75 (SYGQPPT), 76 to 84 (GYSTPTAPQ), 85 to 91 (AYSQPVQ), 92 to 110 (GYGTGTYDSTTATVTTTQA), 111 to 116 (SYAAQT), 117 to 125 (AYGTQPAYP), 126 to 156 (TYGQQPTATAPTRPQDGNKPAETSQPQSSTG), 157 to 163 (GYNQPSL), 164 to 170 (GYGQSNY), 171 to 177 (SYPQVPG), 178 to 188 (SYPMQPVTAPP), 189 to 193 (SYPPT), 194 to 201 (SYSSSQPT), 202 to 206 (SYDQS), 207 to 212 (SYSQQN), 213 to 218 (TYGQPS), 219 to 224 (SYGQQS), 225 to 230 (SYGQQS), 231 to 238 (SYGQQPPT), 239 to 245 (SYPPQTG), 246 to 252 (SYSQAPS), 253 to 259 (QYSQQSS), 260 to 276 (SYGQQSSFRQDHPSSMG), and 277 to 285 (VYGQESGGF). The interval 8-285 (TYSQAAAQQG…GVYGQESGGF (278 aa)) is 31 X approximate tandem repeats. A disordered region spans residues 121–350 (QPAYPTYGQQ…EGPDLDLGLP (230 aa)). Polar residues-rich tracts occupy residues 127–137 (YGQQPTATAPT) and 146–172 (AETSQPQSSTGGYNQPSLGYGQSNYSY). The segment covering 192 to 266 (PTSYSSSQPT…QSSSYGQQSS (75 aa)) has biased composition (low complexity). One can recognise an IQ domain in the interval 256 to 285 (QQSSSYGQQSSFRQDHPSSMGVYGQESGGF). Phosphoserine; by PKC is present on serine 266. Arginine 300, arginine 302, arginine 304, arginine 309, arginine 314, arginine 317, and arginine 321 each carry asymmetric dimethylarginine. The span at 308–334 (DRGGMSRGGRGGGRGGLGAGERGGFNK) shows a compositional bias: gly residues. The span at 335 to 350 (PGGPMDEGPDLDLGLP) shows a compositional bias: low complexity. The RRM domain maps to 360–446 (SAIYVQGLND…SKLKVSLARK (87 aa)). Lysine 438 carries the post-translational modification N6-acetyllysine. 2 disordered regions span residues 447 to 524 (KPPM…WQCP) and 544 to 655 (APKP…DRPY). Asymmetric dimethylarginine is present on residues arginine 454 and arginine 463. At arginine 470 the chain carries Asymmetric dimethylarginine; alternate. An Omega-N-methylarginine; alternate modification is found at arginine 470. Positions 471–489 (GGPGGPGGPGGPMGRMGGR) are enriched in gly residues. Position 485 is an omega-N-methylarginine (arginine 485). Arginine 489 is subject to Asymmetric dimethylarginine; by PRMT8. An asymmetric dimethylarginine mark is found at arginine 493, arginine 499, and arginine 502. Arginine 505 bears the Asymmetric dimethylarginine; alternate mark. Arginine 505 carries the post-translational modification Omega-N-methylarginine; alternate. Residues 517–548 (RAGDWQCPNPGCGNQNFAWRTECNQCKAPKPE) form a RanBP2-type zinc finger. A compositionally biased stretch (pro residues) spans 550–559 (FLPPPFPPPG). Residues arginine 562 and arginine 564 each carry the asymmetric dimethylarginine modification. Gly residues predominate over residues 565–590 (GGPGGMRGGRGGLMDRGGPGGMFRGG). Arginine 571 bears the Asymmetric dimethylarginine; alternate; by PRMT8 mark. Arginine 571 carries the omega-N-methylarginine; alternate; by PRMT8 modification. Asymmetric dimethylarginine is present on residues arginine 574, arginine 580, arginine 588, and arginine 591. Residues 591-605 (RGGDRGGFRGGRGMD) are compositionally biased toward basic and acidic residues. Arginine 595 is subject to Asymmetric dimethylarginine; alternate; by PRMT8. Omega-N-methylarginine; alternate; by PRMT8 is present on arginine 595. An Asymmetric dimethylarginine modification is found at arginine 599. The residue at position 602 (arginine 602) is an Asymmetric dimethylarginine; by PRMT8. Arginine 606 is subject to Asymmetric dimethylarginine; alternate; by PRMT8. Arginine 606 carries the omega-N-methylarginine; alternate; by PRMT8 modification. Residues 606–617 (RGGFGGGRRGGP) show a composition bias toward gly residues. The residue at position 614 (arginine 614) is an Asymmetric dimethylarginine; alternate. Arginine 614 is modified (omega-N-methylarginine; alternate). Arginine 632 and arginine 635 each carry asymmetric dimethylarginine. The Nuclear localization signal motif lies at 638–655 (PGKMDKGEHRQERRDRPY). Residues 640-655 (KMDKGEHRQERRDRPY) show a composition bias toward basic and acidic residues.

It belongs to the RRM TET family. In terms of assembly, binds RNA, POLR2C, SF1 and calmodulin. Interacts with PTK2B and TDRD3. Forms a complex with REC8, PRDM9, SYCP3 and SYCP1; complex formation is dependent of phosphorylated form of REC8 and requires PRDM9 bound to hotspot DNA; EWSR1 joins PRDM9 with the chromosomal axis through REC8. Post-translationally, phosphorylated; calmodulin-binding inhibits phosphorylation of Ser-266. Highly methylated on arginine residues. Methylation is mediated by PRMT1 and, at lower level by PRMT8.

It is found in the nucleus. Its subcellular location is the cytoplasm. It localises to the cell membrane. Functionally, binds to ssRNA containing the consensus sequence 5'-AGGUAA-3'. Might function as a transcriptional repressor. The polypeptide is RNA-binding protein EWS (Ewsr1) (Mus musculus (Mouse)).